The primary structure comprises 337 residues: Glyceraldehyde-3-phosphate dehydrogenase (337 aa).

NADP(+) contacts are provided by residues 11–12 (TV), 34–35 (TR), and G110. Residue 139 to 141 (SCN) participates in D-glyceraldehyde 3-phosphate binding. C140 acts as the Nucleophile in catalysis. D171 is a binding site for NADP(+). Position 194–195 (194–195 (HG)) interacts with D-glyceraldehyde 3-phosphate. Q300 provides a ligand contact to NADP(+).

Belongs to the glyceraldehyde-3-phosphate dehydrogenase family. Homotetramer.

The protein resides in the cytoplasm. The enzyme catalyses D-glyceraldehyde 3-phosphate + phosphate + NADP(+) = (2R)-3-phospho-glyceroyl phosphate + NADPH + H(+). It catalyses the reaction D-glyceraldehyde 3-phosphate + phosphate + NAD(+) = (2R)-3-phospho-glyceroyl phosphate + NADH + H(+). Its pathway is carbohydrate degradation; glycolysis; pyruvate from D-glyceraldehyde 3-phosphate: step 1/5. In terms of biological role, exhibits a dual-cofactor specificity, with a marked preference for NADP(+) over NAD(+). The chain is Glyceraldehyde-3-phosphate dehydrogenase (gap) from Methanothermus fervidus.